The primary structure comprises 227 residues: Cytochrome c oxidase subunit 2 (227 aa).

The Mitochondrial intermembrane segment spans residues 1–14 (MAYPFQLGLQDATS). A helical transmembrane segment spans residues 15–45 (PIMEELLHFHDHTLMIVFLISSLVLYIISLM). Residues 46–59 (LTTKLTHTSTMDAQ) are Mitochondrial matrix-facing. Residues 60–87 (EVETVWTILPAIILISIALPSLRILYMM) traverse the membrane as a helical segment. Over 88–227 (DEINNPSLTV…YFEAWSTLMM (140 aa)) the chain is Mitochondrial intermembrane. His161, Cys196, Glu198, Cys200, His204, and Met207 together coordinate Cu cation. Position 198 (Glu198) interacts with Mg(2+). Phosphotyrosine is present on Tyr218.

It belongs to the cytochrome c oxidase subunit 2 family. Component of the cytochrome c oxidase (complex IV, CIV), a multisubunit enzyme composed of 14 subunits. The complex is composed of a catalytic core of 3 subunits MT-CO1, MT-CO2 and MT-CO3, encoded in the mitochondrial DNA, and 11 supernumerary subunits COX4I, COX5A, COX5B, COX6A, COX6B, COX6C, COX7A, COX7B, COX7C, COX8 and NDUFA4, which are encoded in the nuclear genome. The complex exists as a monomer or a dimer and forms supercomplexes (SCs) in the inner mitochondrial membrane with NADH-ubiquinone oxidoreductase (complex I, CI) and ubiquinol-cytochrome c oxidoreductase (cytochrome b-c1 complex, complex III, CIII), resulting in different assemblies (supercomplex SCI(1)III(2)IV(1) and megacomplex MCI(2)III(2)IV(2)). Found in a complex with TMEM177, COA6, COX18, COX20, SCO1 and SCO2. Interacts with TMEM177 in a COX20-dependent manner. Interacts with COX20. Interacts with COX16. It depends on Cu cation as a cofactor.

It localises to the mitochondrion inner membrane. It catalyses the reaction 4 Fe(II)-[cytochrome c] + O2 + 8 H(+)(in) = 4 Fe(III)-[cytochrome c] + 2 H2O + 4 H(+)(out). In terms of biological role, component of the cytochrome c oxidase, the last enzyme in the mitochondrial electron transport chain which drives oxidative phosphorylation. The respiratory chain contains 3 multisubunit complexes succinate dehydrogenase (complex II, CII), ubiquinol-cytochrome c oxidoreductase (cytochrome b-c1 complex, complex III, CIII) and cytochrome c oxidase (complex IV, CIV), that cooperate to transfer electrons derived from NADH and succinate to molecular oxygen, creating an electrochemical gradient over the inner membrane that drives transmembrane transport and the ATP synthase. Cytochrome c oxidase is the component of the respiratory chain that catalyzes the reduction of oxygen to water. Electrons originating from reduced cytochrome c in the intermembrane space (IMS) are transferred via the dinuclear copper A center (CU(A)) of subunit 2 and heme A of subunit 1 to the active site in subunit 1, a binuclear center (BNC) formed by heme A3 and copper B (CU(B)). The BNC reduces molecular oxygen to 2 water molecules using 4 electrons from cytochrome c in the IMS and 4 protons from the mitochondrial matrix. The sequence is that of Cytochrome c oxidase subunit 2 (MT-CO2) from Lycaon pictus (African wild dog).